We begin with the raw amino-acid sequence, 406 residues long: Inactive serine protease 35 (406 aa).

The N-terminal stretch at 1-17 is a signal peptide; that stretch reads MLLWLIIFVSGWTLSLG. N-linked (GlcNAc...) asparagine glycosylation occurs at asparagine 87. One can recognise a Peptidase S1 domain in the interval 121-401; the sequence is VYGTDSRFSI…ICLWIHGNAA (281 aa). The cysteines at positions 151 and 167 are disulfide-linked. Basic residues predominate over residues 186–204; sequence LKMRNKGGRKKRRGSRRSR. Residues 186–248 form a disordered region; sequence LKMRNKGGRK…RPSFQWTRVK (63 aa).

It belongs to the peptidase S1 family.

The protein resides in the secreted. In Rattus norvegicus (Rat), this protein is Inactive serine protease 35 (Prss35).